The chain runs to 75 residues: Small ribosomal subunit protein bS18 (75 aa).

The protein belongs to the bacterial ribosomal protein bS18 family. As to quaternary structure, part of the 30S ribosomal subunit. Forms a tight heterodimer with protein bS6.

Functionally, binds as a heterodimer with protein bS6 to the central domain of the 16S rRNA, where it helps stabilize the platform of the 30S subunit. The sequence is that of Small ribosomal subunit protein bS18 from Teredinibacter turnerae (strain ATCC 39867 / T7901).